Here is a 467-residue protein sequence, read N- to C-terminus: NADH-ubiquinone oxidoreductase chain 4 (467 aa).

The next 13 membrane-spanning stretches (helical) occupy residues 21 to 40 (SMSK…PTLY), 54 to 74 (MADV…ISNW), 79 to 99 (STLY…NFMC), 105 to 125 (FYMY…LYGA), 135 to 155 (VLMY…LYEV), 168 to 188 (LVLS…GIAV), 207 to 227 (PLAG…FAMI), 239 to 259 (VTYT…TSII), 266 to 286 (LKVI…LGML), 297 to 317 (LVLC…VGGM), 330 to 350 (FQGL…LSFC), 367 to 387 (LTGA…SVLL), and 420 to 440 (VLMI…SWVM).

Belongs to the complex I subunit 4 family.

It is found in the mitochondrion membrane. The enzyme catalyses a ubiquinone + NADH + 5 H(+)(in) = a ubiquinol + NAD(+) + 4 H(+)(out). Its function is as follows. Core subunit of the mitochondrial membrane respiratory chain NADH dehydrogenase (Complex I) that is believed to belong to the minimal assembly required for catalysis. Complex I functions in the transfer of electrons from NADH to the respiratory chain. The immediate electron acceptor for the enzyme is believed to be ubiquinone. The polypeptide is NADH-ubiquinone oxidoreductase chain 4 (ND4) (Debaryomyces hansenii (strain ATCC 36239 / CBS 767 / BCRC 21394 / JCM 1990 / NBRC 0083 / IGC 2968) (Yeast)).